The chain runs to 363 residues: Peptide-N(4)-(N-acetyl-beta-glucosaminyl)asparagine amidase (363 aa).

Zn(2+) contacts are provided by Cys129, Cys132, Cys165, and Cys168. The active-site Nucleophile is Cys191. Residues His218 and Asp235 contribute to the active site. Residue Glu238 participates in substrate binding. Residues 325-363 (RGKTQETKSESVSAASKSSNRGRESGSADWKAQRGEDGK) form a disordered region. The span at 334-343 (ESVSAASKSS) shows a compositional bias: low complexity. Residues 345-363 (RGRESGSADWKAQRGEDGK) are compositionally biased toward basic and acidic residues.

Belongs to the transglutaminase-like superfamily. PNGase family. As to quaternary structure, interacts with RAD23 subunit of 26S proteasome. Zn(2+) serves as cofactor.

It localises to the cytoplasm. The protein resides in the nucleus. The enzyme catalyses Hydrolysis of an N(4)-(acetyl-beta-D-glucosaminyl)asparagine residue in which the glucosamine residue may be further glycosylated, to yield a (substituted) N-acetyl-beta-D-glucosaminylamine and a peptide containing an aspartate residue.. Its activity is regulated as follows. Inhibited by Z-VAD-fmk, a well-known caspase inhibitor. Also inhibited by Man9GlcNAc2-iodoacetoamide. Both molecules inhibit enzyme activity through covalent binding of the carbohydrate to the single Cys-191 residue. In terms of biological role, specifically deglycosylates the denatured form of N-linked glycoproteins in the cytoplasm and assists their proteasome-mediated degradation. Cleaves the beta-aspartyl-glucosamine (GlcNAc) of the glycan and the amide side chain of Asn, converting Asn to Asp. Prefers proteins containing high-mannose over those bearing complex type oligosaccharides. Can recognize misfolded proteins in the endoplasmic reticulum that are exported to the cytosol to be destroyed and deglycosylate them, while it has no activity toward native proteins. Deglycosylation is a prerequisite for subsequent proteasome-mediated degradation of some, but not all, misfolded glycoproteins. Involved in the formation of free oligosaccharide in cytosol. This Saccharomyces cerevisiae (strain ATCC 204508 / S288c) (Baker's yeast) protein is Peptide-N(4)-(N-acetyl-beta-glucosaminyl)asparagine amidase (PNG1).